Consider the following 307-residue polypeptide: Glycerol-3-phosphate dehydrogenase [NAD(P)+] (307 aa).

The NADPH site is built by Phe11, Arg31, and Lys95. Residues Lys95, Gly121, and Ser123 each coordinate sn-glycerol 3-phosphate. Ala125 contacts NADPH. Sn-glycerol 3-phosphate contacts are provided by Lys176, Asp229, Ser239, Arg240, and Asn241. Catalysis depends on Lys176, which acts as the Proton acceptor. Arg240 provides a ligand contact to NADPH. Glu261 serves as a coordination point for NADPH.

The protein belongs to the NAD-dependent glycerol-3-phosphate dehydrogenase family.

Its subcellular location is the cytoplasm. The catalysed reaction is sn-glycerol 3-phosphate + NAD(+) = dihydroxyacetone phosphate + NADH + H(+). It catalyses the reaction sn-glycerol 3-phosphate + NADP(+) = dihydroxyacetone phosphate + NADPH + H(+). It participates in membrane lipid metabolism; glycerophospholipid metabolism. Catalyzes the reduction of the glycolytic intermediate dihydroxyacetone phosphate (DHAP) to sn-glycerol 3-phosphate (G3P), the key precursor for phospholipid synthesis. The polypeptide is Glycerol-3-phosphate dehydrogenase [NAD(P)+] (Jannaschia sp. (strain CCS1)).